Reading from the N-terminus, the 146-residue chain is Heat-stable 19 kDa antigen (146 aa).

Positions 1–20 are cleaved as a signal peptide; the sequence is MKFSLLSAIAAAVFVPFTSA.

The protein belongs to the cerato-platanin family. Glycosylated.

The protein localises to the secreted. The chain is Heat-stable 19 kDa antigen (CSA) from Coccidioides immitis (strain RS) (Valley fever fungus).